Consider the following 197-residue polypeptide: Putative peptidyl-prolyl cis-trans isomerase (197 aa).

The region spanning 14-195 (NEIKLIMHTN…HDITIDSIEI (182 aa)) is the PPIase cyclophilin-type domain.

The protein belongs to the cyclophilin-type PPIase family.

It carries out the reaction [protein]-peptidylproline (omega=180) = [protein]-peptidylproline (omega=0). In terms of biological role, PPIases accelerate the folding of proteins. It catalyzes the cis-trans isomerization of proline imidic peptide bonds in oligopeptides. This Staphylococcus saprophyticus subsp. saprophyticus (strain ATCC 15305 / DSM 20229 / NCIMB 8711 / NCTC 7292 / S-41) protein is Putative peptidyl-prolyl cis-trans isomerase.